We begin with the raw amino-acid sequence, 874 residues long: MSLVEEIERVGNIGLAESFIIDNKIVYGEIGDDIRSATFSPVIGYHTPSEMLDLVESRMYVGYHNPKHMKGIIARGPENLIEEERVKSAIKYAAETFDNKVYKVKHRTFDVMESKREKLDEFLNFIDMAMSGNWFKKLTMTVKSSGSPLKMSEKFYRLPFQQMLMLDVIVAMSARCDLGEYIGLILNYSKTILGLDNMSAEKINEIGERLKKNISGYIIPRRCGKSSFSGCMIALVMAMCPSAGIKCLYTAHKKNQCTDMYSSVEKHVVALIKEFNRINEAKFLELVNKYKARKKLYKGFYYKAAHTPGKKDGALVVSFYKFTEAGRNIKTTDIPMAVNEFRSIVYKQKDTHRGATYNLMFVDETNFLQPAIFNELFPMLNTDKAKMICTSSQKNGQDAKPFVDIRNTRQDGTTTCVVEYVCPNHCMSLIRQTNVAFTVCNCNIFSQPLHINAGAGVRKIMAAFSVKTNKNMEVDDDDDSKSTMLSEIGIMPPGLTKNDILGMNNLQNMRLTSELGRYHFLSKKSNVLKELLVEPDAYSKTVLLYLDPTPTSYRSVDSVTYDRSLHAISAIAQKKTGEYVVLGIEEFTTQKYEKESHDASKAMASIIMAQVTVIHKIYEHFNEFILIPEVNSFDLDNVWYNCGLLLREAVETTDMDDVSILAPCMITESENGTNGKAMFGKKRKIVSELEGKKVIEDPKTKKLRLEFDADGETNILDDYSDGMAKTLTELSTTFKELEHELKHSGKKYKIGYRMNGDKVGRFIDFFSNIFNRKKFTVAENLFSASLGATMEIELAEYLLEKLDNVVIRTDVNKRGKKSYSVSGKSSNKNQHCADDLAVSAVMATSLYNYYRDFKITPEEALIKLQPIYEQGSRL.

This is an uncharacterized protein from Ostreid herpesvirus 1 (isolate France) (OsHV-1).